Reading from the N-terminus, the 57-residue chain is Non-structural protein 3a (57 aa).

An N-terminal signal peptide occupies residues 1 to 23 (MIQSPTSFLIVLILLWCKLVLSC).

Involved in resistance to IFN. The polypeptide is Non-structural protein 3a (Avian infectious bronchitis virus (strain Beaudette) (IBV)).